The sequence spans 826 residues: Dolichyl-diphosphooligosaccharide--protein glycosyltransferase subunit STT3B (826 aa).

The disordered stretch occupies residues 1–60 (MAEPSAPESKHKSSLNSSPWSGLMALGNSRHGHHGPGAQCAHKAAGGAAPPKPAPAGLSG). Ala-2 carries the post-translational modification N-acetylalanine. The Cytoplasmic portion of the chain corresponds to 2–41 (AEPSAPESKHKSSLNSSPWSGLMALGNSRHGHHGPGAQCA). 3 positions are modified to phosphoserine: Ser-13, Ser-18, and Ser-29. The span at 37-49 (GAQCAHKAAGGAA) shows a compositional bias: low complexity. Residues 42–86 (HKAAGGAAPPKPAPAGLSGGLSQPAGWQSLLSFTILFLAWLAGFS) traverse the membrane as a helical segment. Topologically, residues 87–173 (SRLFAVIRFE…VHIRDVCVFL (87 aa)) are lumenal. The DXD motif 1 motif lies at 101–103 (EFD). Asp-103 is a binding site for Mn(2+). A helical transmembrane segment spans residues 174–192 (APTFSGLTSISTFLLTREL). The Cytoplasmic portion of the chain corresponds to 193 to 194 (WN). Residues 195 to 212 (QGAGLLAACFIAIVPGYI) traverse the membrane as a helical segment. The Lumenal portion of the chain corresponds to 213–223 (SRSVAGSFDNE). Mn(2+) contacts are provided by Asp-221 and Glu-223. The DXD motif 2 signature appears at 221–223 (DNE). A helical membrane pass occupies residues 224–243 (GIAIFALQFTYYLWVKSVKT). At 244–245 (GS) the chain is on the cytoplasmic side. The helical transmembrane segment at 246–260 (VFWTMCCCLSYFYMV) threads the bilayer. Residues 261–265 (SAWGG) are Lumenal-facing. Residues 266-282 (YVFIINLIPLHVFVLLL) traverse the membrane as a helical segment. Residues 283-287 (MQRYS) are Cytoplasmic-facing. A helical membrane pass occupies residues 288 to 313 (KRVYIAYSTFYIVGLILSMQIPFVGF). At 314–321 (QPIRTSEH) the chain is on the lumenal side. The helical transmembrane segment at 322–341 (MAAAGVFALLQAYAFLQYLR) threads the bilayer. Residues 342–350 (DRLTKQEFQ) lie on the Cytoplasmic side of the membrane. Residues 351-371 (TLFFLGVSLAAGAVFLSVIYL) traverse the membrane as a helical segment. The Lumenal portion of the chain corresponds to 372 to 410 (TYTGYIAPWSGRFYSLWDTGYAKIHIPIIASVSEHQPTT). Positions 402–405 (SVSE) match the SVSE motif motif. The chain crosses the membrane as a helical span at residues 411 to 433 (WVSFFFDLHILVCTFPAGLWFCI). Topologically, residues 434–439 (KNINDE) are cytoplasmic. Residues 440-456 (RVFVALYAISAVYFAGV) traverse the membrane as a helical segment. At 457–460 (MVRL) the chain is on the lumenal side. Arg-459 contacts dolichyl diphosphooligosaccharide. A helical membrane pass occupies residues 461-482 (MLTLTPVVCMLSAIAFSNVFEH). Over 483-526 (YLGDDMKRENPPVEDSSDEDDKRNQGNLYDKAGKVRKHATEQEK) the chain is Cytoplasmic. The interval 490 to 509 (RENPPVEDSSDEDDKRNQGN) is disordered. Phosphoserine is present on residues Ser-498 and Ser-499. A helical transmembrane segment spans residues 527 to 552 (TEEGLGPNIKSIVTMLMLMLLMMFAV). The Lumenal segment spans residues 553-826 (HCTWVTSNAY…KGKKISKKTV (274 aa)). Residues 604–606 (WWD) form an interacts with target acceptor peptide in protein substrate region. The WWDYG motif signature appears at 604–608 (WWDYG). Tyr-609 serves as a coordination point for dolichyl diphosphooligosaccharide. N-linked (GlcNAc...) asparagine glycans are attached at residues Asn-616 and Asn-623. An N-linked (GlcNAc...) (high mannose) asparagine glycan is attached at Asn-627. Asn-641 carries N-linked (GlcNAc...) asparagine glycosylation. The DK motif motif lies at 671–678 (DINKFLWM).

This sequence belongs to the STT3 family. As to quaternary structure, component of the oligosaccharyltransferase (OST) complex. There are 2 OST complexes, OST-A and OST-B, which contain STT3A or STT3B as catalytic subunit, respectively. OST-A and OST-B contain common core subunits RPN1, RPN2, OST48, OST4, DAD1 and TMEM258, and OST-B contains either MAGT1 or TUSC3 as specific accessory subunit. The cofactor is Mg(2+). Mn(2+) is required as a cofactor. In terms of tissue distribution, expressed in heart, brain, placenta, lung, liver, muscle, kidney and pancreas. Expressed in skin fibroblasts (at protein level).

It is found in the endoplasmic reticulum. The protein localises to the endoplasmic reticulum membrane. The enzyme catalyses a di-trans,poly-cis-dolichyl diphosphooligosaccharide + L-asparaginyl-[protein] = N(4)-(oligosaccharide-(1-&gt;4)-N-acetyl-beta-D-glucosaminyl-(1-&gt;4)-N-acetyl-beta-D-glucosaminyl)-L-asparaginyl-[protein] + a di-trans,poly-cis-dolichyl diphosphate + H(+). Its pathway is protein modification; protein glycosylation. Its function is as follows. Catalytic subunit of the oligosaccharyl transferase (OST) complex that catalyzes the initial transfer of a defined glycan (Glc(3)Man(9)GlcNAc(2) in eukaryotes) from the lipid carrier dolichol-pyrophosphate to an asparagine residue within an Asn-X-Ser/Thr consensus motif in nascent polypeptide chains, the first step in protein N-glycosylation. N-glycosylation occurs cotranslationally and the complex associates with the Sec61 complex at the channel-forming translocon complex that mediates protein translocation across the endoplasmic reticulum (ER). All subunits are required for a maximal enzyme activity. This subunit contains the active site and the acceptor peptide and donor lipid-linked oligosaccharide (LLO) binding pockets. STT3B is present in a small subset of OST complexes (OST-B) and mediates both cotranslational and post-translational N-glycosylation of target proteins: STT3B-containing complexes are required for efficient post-translational glycosylation and while they are less competent than STT3A-containing complexes for cotranslational glycosylation, they have the ability to mediate glycosylation of some nascent sites that are not accessible for STT3A. STT3B-containing complexes also act post-translationally and mediate modification of skipped glycosylation sites in unfolded proteins. Plays a role in ER-associated degradation (ERAD) pathway that mediates ubiquitin-dependent degradation of misfolded endoplasmic reticulum proteins by mediating N-glycosylation of unfolded proteins, which are then recognized by the ERAD pathway and targeted for degradation. Mediates glycosylation of the disease variant AMYL-TTR 'Asp-38' of TTR at 'Asn-118', leading to its degradation. In Homo sapiens (Human), this protein is Dolichyl-diphosphooligosaccharide--protein glycosyltransferase subunit STT3B.